The primary structure comprises 66 residues: MIIPIRCFTCGKPLGHLYAVFKRRVLAGEHPGRVLDDLGVTRYCCRRTLMAHVEWIDDVLLYERRS.

C7, C10, C44, and C45 together coordinate Zn(2+).

Belongs to the archaeal Rpo10/eukaryotic RPB10 RNA polymerase subunit family. In terms of assembly, part of the RNA polymerase complex. Requires Zn(2+) as cofactor.

It localises to the cytoplasm. It carries out the reaction RNA(n) + a ribonucleoside 5'-triphosphate = RNA(n+1) + diphosphate. Functionally, DNA-dependent RNA polymerase (RNAP) catalyzes the transcription of DNA into RNA using the four ribonucleoside triphosphates as substrates. The chain is DNA-directed RNA polymerase subunit Rpo10 from Pyrobaculum aerophilum (strain ATCC 51768 / DSM 7523 / JCM 9630 / CIP 104966 / NBRC 100827 / IM2).